Consider the following 298-residue polypeptide: Oxygen-dependent coproporphyrinogen-III oxidase (298 aa).

Residue S92 coordinates substrate. Positions 96 and 106 each coordinate a divalent metal cation. H106 (proton donor) is an active-site residue. Residue 108–110 coordinates substrate; sequence NVR. A divalent metal cation contacts are provided by H145 and H175. An important for dimerization region spans residues 239-274; the sequence is YVEFNLVYDRGTLFGLQSGGRSESILMSLPPRVRWE. Substrate is bound at residue 257–259; it reads GGR.

This sequence belongs to the aerobic coproporphyrinogen-III oxidase family. As to quaternary structure, homodimer. A divalent metal cation serves as cofactor.

It localises to the cytoplasm. It carries out the reaction coproporphyrinogen III + O2 + 2 H(+) = protoporphyrinogen IX + 2 CO2 + 2 H2O. The protein operates within porphyrin-containing compound metabolism; protoporphyrin-IX biosynthesis; protoporphyrinogen-IX from coproporphyrinogen-III (O2 route): step 1/1. Functionally, involved in the heme biosynthesis. Catalyzes the aerobic oxidative decarboxylation of propionate groups of rings A and B of coproporphyrinogen-III to yield the vinyl groups in protoporphyrinogen-IX. The protein is Oxygen-dependent coproporphyrinogen-III oxidase of Stenotrophomonas maltophilia (strain R551-3).